We begin with the raw amino-acid sequence, 597 residues long: Elongation factor 4 (597 aa).

The tr-type G domain maps to 2–184 (QNIRNFSIIA…DIVKKIPAPE (183 aa)). Residues 14-19 (DHGKST) and 131-134 (NKID) each bind GTP.

It belongs to the TRAFAC class translation factor GTPase superfamily. Classic translation factor GTPase family. LepA subfamily.

The protein resides in the cell inner membrane. It carries out the reaction GTP + H2O = GDP + phosphate + H(+). Its function is as follows. Required for accurate and efficient protein synthesis under certain stress conditions. May act as a fidelity factor of the translation reaction, by catalyzing a one-codon backward translocation of tRNAs on improperly translocated ribosomes. Back-translocation proceeds from a post-translocation (POST) complex to a pre-translocation (PRE) complex, thus giving elongation factor G a second chance to translocate the tRNAs correctly. Binds to ribosomes in a GTP-dependent manner. The sequence is that of Elongation factor 4 from Haemophilus ducreyi (strain 35000HP / ATCC 700724).